A 1342-amino-acid polypeptide reads, in one-letter code: DNA-directed RNA polymerase subunit beta (1342 aa).

This sequence belongs to the RNA polymerase beta chain family. In terms of assembly, the RNAP catalytic core consists of 2 alpha, 1 beta, 1 beta' and 1 omega subunit. When a sigma factor is associated with the core the holoenzyme is formed, which can initiate transcription.

The catalysed reaction is RNA(n) + a ribonucleoside 5'-triphosphate = RNA(n+1) + diphosphate. Functionally, DNA-dependent RNA polymerase catalyzes the transcription of DNA into RNA using the four ribonucleoside triphosphates as substrates. This Buchnera aphidicola subsp. Acyrthosiphon pisum (strain Tuc7) protein is DNA-directed RNA polymerase subunit beta.